Reading from the N-terminus, the 268-residue chain is Putative esterase/lipase 1 (268 aa).

Histidine 27 is a catalytic residue. Serine 94 (charge relay system) is an active-site residue.

Belongs to the lipase/esterase LIP3/BchO family.

This is Putative esterase/lipase 1 from Mycoplasma genitalium (strain ATCC 33530 / DSM 19775 / NCTC 10195 / G37) (Mycoplasmoides genitalium).